Consider the following 298-residue polypeptide: Nucleotide-binding protein MLBr00563 (298 aa).

Position 21–28 (21–28 (GLSGAGRG)) interacts with ATP. GTP is bound at residue 72–75 (DVRS).

It belongs to the RapZ-like family.

Its function is as follows. Displays ATPase and GTPase activities. This chain is Nucleotide-binding protein MLBr00563, found in Mycobacterium leprae (strain Br4923).